The primary structure comprises 374 residues: Ribosomal RNA large subunit methyltransferase G (374 aa).

It belongs to the methyltransferase superfamily. RlmG family.

It is found in the cytoplasm. The catalysed reaction is guanosine(1835) in 23S rRNA + S-adenosyl-L-methionine = N(2)-methylguanosine(1835) in 23S rRNA + S-adenosyl-L-homocysteine + H(+). In terms of biological role, specifically methylates the guanine in position 1835 (m2G1835) of 23S rRNA. In Pseudomonas syringae pv. syringae (strain B728a), this protein is Ribosomal RNA large subunit methyltransferase G.